The chain runs to 174 residues: NADH-quinone oxidoreductase subunit I (174 aa).

4Fe-4S ferredoxin-type domains are found at residues 44 to 74 and 90 to 119; these read LNRY…VEGD and RVYQ…MTND. [4Fe-4S] cluster contacts are provided by Cys54, Cys57, Cys60, Cys64, Cys99, Cys102, Cys105, and Cys109.

It belongs to the complex I 23 kDa subunit family. NDH-1 is composed of 14 different subunits. Subunits NuoA, H, J, K, L, M, N constitute the membrane sector of the complex. Requires [4Fe-4S] cluster as cofactor.

Its subcellular location is the cell membrane. It catalyses the reaction a quinone + NADH + 5 H(+)(in) = a quinol + NAD(+) + 4 H(+)(out). NDH-1 shuttles electrons from NADH, via FMN and iron-sulfur (Fe-S) centers, to quinones in the respiratory chain. The immediate electron acceptor for the enzyme in this species is believed to be menaquinone. Couples the redox reaction to proton translocation (for every two electrons transferred, four hydrogen ions are translocated across the cytoplasmic membrane), and thus conserves the redox energy in a proton gradient. The protein is NADH-quinone oxidoreductase subunit I of Mycobacterium sp. (strain JLS).